Here is a 266-residue protein sequence, read N- to C-terminus: Diphthine synthase (266 aa).

S-adenosyl-L-methionine contacts are provided by residues Leu-9, Asp-84, Val-87, Ser-112–Ile-113, Leu-169, Ala-210, and His-235.

This sequence belongs to the diphthine synthase family. Homodimer.

It carries out the reaction 2-[(3S)-amino-3-carboxypropyl]-L-histidyl-[translation elongation factor 2] + 3 S-adenosyl-L-methionine = diphthine-[translation elongation factor 2] + 3 S-adenosyl-L-homocysteine + 3 H(+). Its pathway is protein modification; peptidyl-diphthamide biosynthesis. S-adenosyl-L-methionine-dependent methyltransferase that catalyzes the trimethylation of the amino group of the modified target histidine residue in translation elongation factor 2 (EF-2), to form an intermediate called diphthine. The three successive methylation reactions represent the second step of diphthamide biosynthesis. The polypeptide is Diphthine synthase (Methanosarcina mazei (strain ATCC BAA-159 / DSM 3647 / Goe1 / Go1 / JCM 11833 / OCM 88) (Methanosarcina frisia)).